We begin with the raw amino-acid sequence, 239 residues long: 1-(5-phosphoribosyl)-5-[(5-phosphoribosylamino)methylideneamino] imidazole-4-carboxamide isomerase (239 aa).

Asp-8 functions as the Proton acceptor in the catalytic mechanism. Asp-129 (proton donor) is an active-site residue.

The protein belongs to the HisA/HisF family.

The protein resides in the cytoplasm. The catalysed reaction is 1-(5-phospho-beta-D-ribosyl)-5-[(5-phospho-beta-D-ribosylamino)methylideneamino]imidazole-4-carboxamide = 5-[(5-phospho-1-deoxy-D-ribulos-1-ylimino)methylamino]-1-(5-phospho-beta-D-ribosyl)imidazole-4-carboxamide. Its pathway is amino-acid biosynthesis; L-histidine biosynthesis; L-histidine from 5-phospho-alpha-D-ribose 1-diphosphate: step 4/9. The protein is 1-(5-phosphoribosyl)-5-[(5-phosphoribosylamino)methylideneamino] imidazole-4-carboxamide isomerase of Legionella pneumophila (strain Corby).